Reading from the N-terminus, the 210-residue chain is Cdc42 effector protein 2 (210 aa).

Residue Ser-2 is modified to N-acetylserine. The CRIB domain maps to 30–44; sequence ISPPLGDFRHTIHIG. Phosphoserine occurs at positions 31, 101, and 141. A disordered region spans residues 124 to 145; that stretch reads AQAPPKPPRLHLETPQASPQEA.

It belongs to the BORG/CEP family. In terms of assembly, interacts with CDC42 and RHOQ, in a GTP-dependent manner, and with SEPT7.

Its subcellular location is the endomembrane system. It localises to the cytoplasm. It is found in the cytoskeleton. In terms of biological role, probably involved in the organization of the actin cytoskeleton. May act downstream of CDC42 to induce actin filament assembly leading to cell shape changes. Induces pseudopodia formation in fibroblasts in a CDC42-dependent manner. This Bos taurus (Bovine) protein is Cdc42 effector protein 2 (CDC42EP2).